Consider the following 430-residue polypeptide: Glutamate-1-semialdehyde 2,1-aminomutase (430 aa).

An N6-(pyridoxal phosphate)lysine modification is found at Lys-265.

This sequence belongs to the class-III pyridoxal-phosphate-dependent aminotransferase family. HemL subfamily. Homodimer. It depends on pyridoxal 5'-phosphate as a cofactor.

Its subcellular location is the cytoplasm. It catalyses the reaction (S)-4-amino-5-oxopentanoate = 5-aminolevulinate. It functions in the pathway porphyrin-containing compound metabolism; protoporphyrin-IX biosynthesis; 5-aminolevulinate from L-glutamyl-tRNA(Glu): step 2/2. This chain is Glutamate-1-semialdehyde 2,1-aminomutase, found in Shewanella baltica (strain OS195).